A 693-amino-acid chain; its full sequence is Elongation factor G (693 aa).

The region spanning 8–283 (NKVRNFGIAA…AVCDYLPSPL (276 aa)) is the tr-type G domain. GTP-binding positions include 17–24 (AHIDAGKT), 81–85 (DTPGH), and 135–138 (NKMD).

This sequence belongs to the TRAFAC class translation factor GTPase superfamily. Classic translation factor GTPase family. EF-G/EF-2 subfamily.

The protein localises to the cytoplasm. Catalyzes the GTP-dependent ribosomal translocation step during translation elongation. During this step, the ribosome changes from the pre-translocational (PRE) to the post-translocational (POST) state as the newly formed A-site-bound peptidyl-tRNA and P-site-bound deacylated tRNA move to the P and E sites, respectively. Catalyzes the coordinated movement of the two tRNA molecules, the mRNA and conformational changes in the ribosome. This is Elongation factor G from Endomicrobium trichonymphae.